Here is a 373-residue protein sequence, read N- to C-terminus: Queuine tRNA-ribosyltransferase (373 aa).

The active-site Proton acceptor is Asp89. Substrate contacts are provided by residues 89-93 (DSGGF), Asp143, Gln187, and Gly214. The tract at residues 245–251 (GVGKPED) is RNA binding. Asp264 acts as the Nucleophile in catalysis. Residues 269–273 (TRNAR) form an RNA binding; important for wobble base 34 recognition region. Residues Cys302, Cys304, Cys307, and His333 each coordinate Zn(2+).

This sequence belongs to the queuine tRNA-ribosyltransferase family. Homodimer. Within each dimer, one monomer is responsible for RNA recognition and catalysis, while the other monomer binds to the replacement base PreQ1. Zn(2+) serves as cofactor.

It carries out the reaction 7-aminomethyl-7-carbaguanine + guanosine(34) in tRNA = 7-aminomethyl-7-carbaguanosine(34) in tRNA + guanine. Its pathway is tRNA modification; tRNA-queuosine biosynthesis. In terms of biological role, catalyzes the base-exchange of a guanine (G) residue with the queuine precursor 7-aminomethyl-7-deazaguanine (PreQ1) at position 34 (anticodon wobble position) in tRNAs with GU(N) anticodons (tRNA-Asp, -Asn, -His and -Tyr). Catalysis occurs through a double-displacement mechanism. The nucleophile active site attacks the C1' of nucleotide 34 to detach the guanine base from the RNA, forming a covalent enzyme-RNA intermediate. The proton acceptor active site deprotonates the incoming PreQ1, allowing a nucleophilic attack on the C1' of the ribose to form the product. After dissociation, two additional enzymatic reactions on the tRNA convert PreQ1 to queuine (Q), resulting in the hypermodified nucleoside queuosine (7-(((4,5-cis-dihydroxy-2-cyclopenten-1-yl)amino)methyl)-7-deazaguanosine). This chain is Queuine tRNA-ribosyltransferase, found in Tolumonas auensis (strain DSM 9187 / NBRC 110442 / TA 4).